We begin with the raw amino-acid sequence, 171 residues long: 3-hydroxydecanoyl-[acyl-carrier-protein] dehydratase (171 aa).

His-70 is an active-site residue.

The protein belongs to the thioester dehydratase family. FabA subfamily. Homodimer.

The protein localises to the cytoplasm. It catalyses the reaction a (3R)-hydroxyacyl-[ACP] = a (2E)-enoyl-[ACP] + H2O. The enzyme catalyses (3R)-hydroxydecanoyl-[ACP] = (2E)-decenoyl-[ACP] + H2O. The catalysed reaction is (2E)-decenoyl-[ACP] = (3Z)-decenoyl-[ACP]. Its pathway is lipid metabolism; fatty acid biosynthesis. Necessary for the introduction of cis unsaturation into fatty acids. Catalyzes the dehydration of (3R)-3-hydroxydecanoyl-ACP to E-(2)-decenoyl-ACP and then its isomerization to Z-(3)-decenoyl-ACP. Can catalyze the dehydratase reaction for beta-hydroxyacyl-ACPs with saturated chain lengths up to 16:0, being most active on intermediate chain length. This chain is 3-hydroxydecanoyl-[acyl-carrier-protein] dehydratase, found in Xanthomonas axonopodis pv. citri (strain 306).